The chain runs to 98 residues: MAISKALIASLLISLLVLQLVQADVENSQKKNGYAKKIDCGSACVARCRLSRRPRLCHRACGTCCYRCNCVPPGTYGNYDKCQCYASLTTHGGRRKCP.

The signal sequence occupies residues 1-23 (MAISKALIASLLISLLVLQLVQA).

This sequence belongs to the GASA family. Six disulfide bonds may be present. Expressed in flower buds, style, stamen filaments, vasculature of sepals, flower abscission zone and green siliques. Lower levels seen in the root phloem, cotyledons and vasculature of rosette leaves.

The protein resides in the secreted. In terms of biological role, gibberellin-regulated protein that may function in hormonal controlled steps of development such as seed germination, flowering and seed maturation. The chain is Gibberellin-regulated protein 1 (GASA1) from Arabidopsis thaliana (Mouse-ear cress).